The chain runs to 498 residues: Polyamine aminopropyltransferase (498 aa).

Helical transmembrane passes span 7-27, 35-55, 67-87, 97-117, 134-154, and 163-183; these read ISVL…GTIA, VTQF…GSWL, FLEI…ILYL, IPLF…IPVL, VLSL…IFFA, and GFIF…VLPL. A spermidine synthase region spans residues 196–446; the sequence is VVVLTLLILG…AGQRPIQFKK (251 aa). The region spanning 200–439 is the PABS domain; the sequence is TLLILGFSYS…GEWGFVLAGQ (240 aa). Glutamine 234 serves as a coordination point for S-methyl-5'-thioadenosine. Positions 264 and 288 each coordinate spermidine. S-methyl-5'-thioadenosine-binding positions include aspartate 308 and 342 to 343; that span reads DA. Aspartate 360 serves as the catalytic Proton acceptor.

It belongs to the spermidine/spermine synthase family. In terms of assembly, homodimer or homotetramer.

It is found in the cell membrane. The catalysed reaction is S-adenosyl 3-(methylsulfanyl)propylamine + putrescine = S-methyl-5'-thioadenosine + spermidine + H(+). Its pathway is amine and polyamine biosynthesis; spermidine biosynthesis; spermidine from putrescine: step 1/1. Functionally, catalyzes the irreversible transfer of a propylamine group from the amino donor S-adenosylmethioninamine (decarboxy-AdoMet) to putrescine (1,4-diaminobutane) to yield spermidine. The sequence is that of Polyamine aminopropyltransferase from Leptospira interrogans serogroup Icterohaemorrhagiae serovar copenhageni (strain Fiocruz L1-130).